Reading from the N-terminus, the 152-residue chain is MKSPDEVLREGELEKRSDSLFQLWKKKRGVLTSDRLSLFPASPRARPKELRFHSILKVDCVERTGKYVYFTIVTTDHKEIDFRCAGESCWNAAIALALIDFQNRRALQDFRSRQERTAPAAPAEDAVAAAAAAPSEPSEPSRPSPQPKPRTP.

Phosphoserine is present on residues serine 3 and serine 42. The PH domain maps to 7–99 (VLREGELEKR…WNAAIALALI (93 aa)). Positions 112–152 (SRQERTAPAAPAEDAVAAAAAAPSEPSEPSRPSPQPKPRTP) are disordered. Over residues 118-138 (APAAPAEDAVAAAAAAPSEPS) the composition is skewed to low complexity. Over residues 140–152 (PSRPSPQPKPRTP) the composition is skewed to pro residues. Serine 141 and serine 144 each carry phosphoserine. Threonine 151 bears the Phosphothreonine mark.

The protein belongs to the PHLDA2 family. In terms of tissue distribution, expressed in placenta and adult prostate gland. In placenta, it is present in all cells of the villous cytotrophoblast. The protein is absent in cells from hydatidiform moles. Hydatidiform mole is a gestation characterized by abnormal development of both fetus and trophoblast. The majority of hydatidiform moles are associated with an excess of paternal to maternal genomes and are likely to result from the abnormal expression of imprinted genes (at protein level). Expressed at low levels in adult liver and lung, and fetal liver. Expressed in adult brain and neuroblastoma, medullablastoma and glioblastoma cell lines.

It is found in the cytoplasm. The protein localises to the membrane. Plays a role in regulating placenta growth. May act via its PH domain that competes with other PH domain-containing proteins, thereby preventing their binding to membrane lipids. This is Pleckstrin homology-like domain family A member 2 (PHLDA2) from Homo sapiens (Human).